Here is a 379-residue protein sequence, read N- to C-terminus: Probable RNA methyltransferase RB6963 (379 aa).

Glu89 acts as the Proton acceptor in catalysis. Residues 96 to 332 (ATGRTTLCVS…VRYSLGNDIE (237 aa)) form the Radical SAM core domain. The cysteines at positions 103 and 335 are disulfide-linked. Residues Cys110, Cys114, and Cys117 each coordinate [4Fe-4S] cluster. Residues 160–161 (GE), Ser192, 215–217 (SLH), and Asn291 contribute to the S-adenosyl-L-methionine site. The active-site S-methylcysteine intermediate is the Cys335.

It belongs to the radical SAM superfamily. RlmN family. Requires [4Fe-4S] cluster as cofactor.

The protein localises to the cytoplasm. This is Probable RNA methyltransferase RB6963 from Rhodopirellula baltica (strain DSM 10527 / NCIMB 13988 / SH1).